A 413-amino-acid polypeptide reads, in one-letter code: DnaJ protein homolog (413 aa).

The J domain maps to 10-75 (NTKYYEILGV…REIYDQYGED (66 aa)). A CR-type zinc finger spans residues 133–217 (GTSKKLSLSR…CKGEKVVQEK (85 aa)). CXXCXGXG motif repeat units follow at residues 146 to 153 (CSKCKGKG), 162 to 169 (CPGCQGSG), 189 to 196 (CNECKGTG), and 205 to 212 (CSQCKGEK). A disordered region spans residues 387–413 (RRKQAQEAYDEDEDMHGGAQRVQCAQQ). Cys410 carries the post-translational modification Cysteine methyl ester. Cys410 carries the S-farnesyl cysteine lipid modification. A propeptide spans 411-413 (AQQ) (removed in mature form).

In terms of tissue distribution, expressed in seedlings in all tissues, but exceedingly high levels in hypocotyledons and roots.

It localises to the cell membrane. Functionally, plays a continuous role in plant development probably in the structural organization of compartments. The chain is DnaJ protein homolog (DNAJ1) from Cucumis sativus (Cucumber).